The following is a 294-amino-acid chain: BOI-related E3 ubiquitin-protein ligase 1 (294 aa).

Residues 168–204 form a WRD domain region; it reads LQERVKNLYVENQIWRDLAQTNEATANNLRSNLEQVL. Residues 183–212 are a coiled coil; the sequence is RDLAQTNEATANNLRSNLEQVLAQVDDLDA. An RING-type zinc finger spans residues 244-281; the sequence is CKRCGELTASVLVLPCRHLCLCTVCGSSALLRTCPVCD.

In terms of assembly, interacts with the DELLA proteins GAI, RGA, RGL1, RGL2 and RGL3.

The enzyme catalyses S-ubiquitinyl-[E2 ubiquitin-conjugating enzyme]-L-cysteine + [acceptor protein]-L-lysine = [E2 ubiquitin-conjugating enzyme]-L-cysteine + N(6)-ubiquitinyl-[acceptor protein]-L-lysine.. It participates in protein degradation; proteasomal ubiquitin-dependent pathway. In terms of biological role, E3 ubiquitin-protein ligase involved in regulation of abiotic stress responses. Not involved in ubiquitination of MYB108/BOS1. Has no effect on the stability of the DELLA proteins. The sequence is that of BOI-related E3 ubiquitin-protein ligase 1 (BRG1) from Arabidopsis thaliana (Mouse-ear cress).